A 401-amino-acid polypeptide reads, in one-letter code: NADH-quinone oxidoreductase subunit D (401 aa).

This sequence belongs to the complex I 49 kDa subunit family. NDH-1 is composed of 14 different subunits. Subunits NuoB, C, D, E, F, and G constitute the peripheral sector of the complex.

It is found in the cell inner membrane. It carries out the reaction a quinone + NADH + 5 H(+)(in) = a quinol + NAD(+) + 4 H(+)(out). NDH-1 shuttles electrons from NADH, via FMN and iron-sulfur (Fe-S) centers, to quinones in the respiratory chain. The immediate electron acceptor for the enzyme in this species is believed to be ubiquinone. Couples the redox reaction to proton translocation (for every two electrons transferred, four hydrogen ions are translocated across the cytoplasmic membrane), and thus conserves the redox energy in a proton gradient. The polypeptide is NADH-quinone oxidoreductase subunit D (Rhodopseudomonas palustris (strain HaA2)).